The primary structure comprises 194 residues: Amidophosphoribosyltransferase (194 aa).

A propeptide spanning residues 1–11 (MPHEPKGLNEE) is cleaved from the precursor. The active-site Nucleophile is cysteine 12. In terms of domain architecture, Glutamine amidotransferase type-2 spans 12 to 194 (CGVFGVWGNP…PHGFRPMVVG (183 aa)).

It in the C-terminal section; belongs to the purine/pyrimidine phosphoribosyltransferase family.

The enzyme catalyses 5-phospho-beta-D-ribosylamine + L-glutamate + diphosphate = 5-phospho-alpha-D-ribose 1-diphosphate + L-glutamine + H2O. The protein operates within purine metabolism; IMP biosynthesis via de novo pathway; N(1)-(5-phospho-D-ribosyl)glycinamide from 5-phospho-alpha-D-ribose 1-diphosphate: step 1/2. In terms of biological role, catalyzes the formation of phosphoribosylamine from phosphoribosylpyrophosphate (PRPP) and glutamine. The protein is Amidophosphoribosyltransferase of Lacticaseibacillus casei (Lactobacillus casei).